Reading from the N-terminus, the 163-residue chain is ATP synthase subunit b (163 aa).

Residues 10-29 traverse the membrane as a helical segment; it reads ALYQLLAFSVLLFFLSKFAL.

This sequence belongs to the ATPase B chain family. As to quaternary structure, F-type ATPases have 2 components, F(1) - the catalytic core - and F(0) - the membrane proton channel. F(1) has five subunits: alpha(3), beta(3), gamma(1), delta(1), epsilon(1). F(0) has three main subunits: a(1), b(2) and c(10-14). The alpha and beta chains form an alternating ring which encloses part of the gamma chain. F(1) is attached to F(0) by a central stalk formed by the gamma and epsilon chains, while a peripheral stalk is formed by the delta and b chains.

The protein resides in the cell membrane. In terms of biological role, f(1)F(0) ATP synthase produces ATP from ADP in the presence of a proton or sodium gradient. F-type ATPases consist of two structural domains, F(1) containing the extramembraneous catalytic core and F(0) containing the membrane proton channel, linked together by a central stalk and a peripheral stalk. During catalysis, ATP synthesis in the catalytic domain of F(1) is coupled via a rotary mechanism of the central stalk subunits to proton translocation. Its function is as follows. Component of the F(0) channel, it forms part of the peripheral stalk, linking F(1) to F(0). The sequence is that of ATP synthase subunit b from Alkalihalophilus pseudofirmus (strain ATCC BAA-2126 / JCM 17055 / OF4) (Bacillus pseudofirmus).